The primary structure comprises 2636 residues: Ankyrin repeat and KH domain-containing protein CBG24701 (2636 aa).

ANK repeat units follow at residues 252-281 (SRIT…DPNA), 286-317 (NCNT…KVDV), 361-390 (NDNS…KNQQ), 435-464 (NLPS…RIDE), 468-500 (HKNT…DVNA), 505-534 (SGDT…DLTT), 536-564 (KITP…TIPQ), 566-595 (QLSR…DLNF), 598-627 (DERT…SVNF), 632-661 (NDAT…DPML), and 665-695 (DGVN…NMDL). Disordered stretches follow at residues 994–1030 (PIDA…TTIE), 1172–1191 (KSNR…KKGK), and 1230–1268 (NNTQ…VIDK). The segment covering 1006-1030 (QQTGPKTTSLTTPQPDESNGATTIE) has biased composition (polar residues). The segment covering 1233 to 1245 (QVQQQQGQQQQGQ) has biased composition (low complexity). Residues 1249–1260 (THSEGDGTERAK) are compositionally biased toward basic and acidic residues. 10 ANK repeats span residues 1273–1302 (TLET…NIEH), 1306–1335 (KGFT…AIEA), 1340–1369 (TKDT…NKEH), 1373–1402 (SDYT…EINS), 1408–1437 (LGIS…DINA), 1447–1476 (YRNT…NVEH), 1480–1509 (TGLT…DPNA), 1515–1546 (TKDT…DIRN), 1548–1577 (KGCS…DTDM), and 1581–1610 (RKMS…QFPN). Residues 1638 to 1696 (RNAKKAQAETAEETANRLLQLIDDEKERDINKKQKIKDKKKQKKEAKKKFQAEQEQLSA) are a coiled coil. The segment at 1669 to 1857 (KKQKIKDKKK…SSISERQHSW (189 aa)) is disordered. Basic residues predominate over residues 1670–1686 (KQKIKDKKKQKKEAKKK). Over residues 1698–1708 (PSKPEPVVAPE) the composition is skewed to pro residues. Positions 1709 to 1722 (PEPEPETEPVEEPA) are enriched in acidic residues. Residues 1811–1829 (DWQKAGKEGKKVRPKREGR) show a composition bias toward basic and acidic residues. Residues 1832-1851 (APSSAGSSQAKHRSNTSSIS) show a composition bias toward polar residues. The region spanning 1864 to 1929 (VKAYEFTVPG…DVVSMAVNII (66 aa)) is the KH domain. Disordered regions lie at residues 1980–2182 (SASI…SLPS), 2196–2221 (FKPT…STAS), 2269–2292 (NSTA…SNDF), 2301–2320 (SNQK…NSQL), 2352–2417 (SQSS…TQQQ), 2444–2465 (MHRQ…NPYY), and 2539–2636 (GMMQ…SSRM). Over residues 1994–2008 (SQCNRSSKSHGNQAT) the composition is skewed to polar residues. Positions 2025-2045 (TPPTQTQTKQQPTPSPQVQQP) are enriched in low complexity. The segment covering 2057 to 2083 (SLAQSSVPQATENVTKPTQTPPASVQQ) has biased composition (polar residues). Low complexity-rich tracts occupy residues 2099-2119 (QVVQ…QRPQ) and 2139-2148 (QQHMQQIQQQ). The segment covering 2167 to 2179 (PGPPVQPQTPPQS) has biased composition (pro residues). A compositionally biased stretch (low complexity) spans 2269-2280 (NSTASSLNTATT). Polar residues predominate over residues 2281 to 2292 (KNDTSDWGSNDF). Low complexity-rich tracts occupy residues 2361 to 2373 (QHQQ…MQDP) and 2391 to 2417 (PQQF…TQQQ). 3 stretches are compositionally biased toward polar residues: residues 2449-2465 (NSSS…NPYY), 2565-2574 (RSASGSSQNR), and 2583-2595 (QQPQ…TQAD). A compositionally biased stretch (low complexity) spans 2599 to 2615 (RLLLQQQQQQRSSQQQQ). The span at 2616–2636 (NPTNQGLPQKWSNTWNSSSRM) shows a compositional bias: polar residues.

The protein belongs to the mask family.

It is found in the cytoplasm. The protein is Ankyrin repeat and KH domain-containing protein CBG24701 of Caenorhabditis briggsae.